The primary structure comprises 469 residues: Glutamate--tRNA ligase (469 aa).

The short motif at 9-19 (PSPTGFLHVGG) is the 'HIGH' region element. Residues cysteine 98, cysteine 100, cysteine 125, and aspartate 127 each coordinate Zn(2+). Positions 236-240 (KLSKR) match the 'KMSKS' region motif. ATP is bound at residue lysine 239.

The protein belongs to the class-I aminoacyl-tRNA synthetase family. Glutamate--tRNA ligase type 1 subfamily. In terms of assembly, monomer. It depends on Zn(2+) as a cofactor.

The protein localises to the cytoplasm. It carries out the reaction tRNA(Glu) + L-glutamate + ATP = L-glutamyl-tRNA(Glu) + AMP + diphosphate. In terms of biological role, catalyzes the attachment of glutamate to tRNA(Glu) in a two-step reaction: glutamate is first activated by ATP to form Glu-AMP and then transferred to the acceptor end of tRNA(Glu). In Shewanella sediminis (strain HAW-EB3), this protein is Glutamate--tRNA ligase.